Reading from the N-terminus, the 248-residue chain is Proteasome subunit alpha type-7 (248 aa).

S130 carries O-linked (GlcNAc) serine glycosylation. Y153 carries the phosphotyrosine modification.

It belongs to the peptidase T1A family. As to quaternary structure, the 26S proteasome consists of a 20S proteasome core and two 19S regulatory subunits. The 20S proteasome core is a barrel-shaped complex made of 28 subunits that are arranged in four stacked rings. The two outer rings are each formed by seven alpha subunits, and the two inner rings are formed by seven beta subunits. The proteolytic activity is exerted by three beta-subunits PSMB5, PSMB6 and PSMB7. PSMA7 interacts directly with the PSMG1-PSMG2 heterodimer which promotes 20S proteasome assembly. Interacts with HIF1A. Interacts with RAB7A. Interacts with PRKN. Interacts with ABL1 and ABL2. Interacts with EMAP2. Interacts with MAVS.

It localises to the cytoplasm. Its subcellular location is the nucleus. Its function is as follows. Component of the 20S core proteasome complex involved in the proteolytic degradation of most intracellular proteins. This complex plays numerous essential roles within the cell by associating with different regulatory particles. Associated with two 19S regulatory particles, forms the 26S proteasome and thus participates in the ATP-dependent degradation of ubiquitinated proteins. The 26S proteasome plays a key role in the maintenance of protein homeostasis by removing misfolded or damaged proteins that could impair cellular functions, and by removing proteins whose functions are no longer required. Associated with the PA200 or PA28, the 20S proteasome mediates ubiquitin-independent protein degradation. This type of proteolysis is required in several pathways including spermatogenesis (20S-PA200 complex) or generation of a subset of MHC class I-presented antigenic peptides (20S-PA28 complex). Inhibits the transactivation function of HIF-1A under both normoxic and hypoxia-mimicking conditions. The interaction with EMAP2 increases the proteasome-mediated HIF-1A degradation under the hypoxic conditions. Plays a role in hepatitis C virus internal ribosome entry site-mediated translation. Mediates nuclear translocation of the androgen receptor (AR) and thereby enhances androgen-mediated transactivation. Promotes MAVS degradation and thereby negatively regulates MAVS-mediated innate immune response. The protein is Proteasome subunit alpha type-7 (PSMA7) of Pongo abelii (Sumatran orangutan).